The sequence spans 158 residues: uncharacterized protein (158 aa).

The disordered stretch occupies residues 1-26 (MRASRSPPSPRRCHHHHEATGAASGA).

This is an uncharacterized protein from Homo sapiens (Human).